An 883-amino-acid polypeptide reads, in one-letter code: Valine--tRNA ligase (883 aa).

The short motif at 50 to 60 (PNVTGKLHMGH) is the 'HIGH' region element. Positions 527-531 (KMSKS) match the 'KMSKS' region motif. Lys-530 contacts ATP. Residues 811 to 883 (LNELIDLDEE…KQRLEQLQRA (73 aa)) are a coiled coil. A disordered region spans residues 859 to 883 (QRTKRSDFEDQLTSTKQRLEQLQRA).

The protein belongs to the class-I aminoacyl-tRNA synthetase family. ValS type 1 subfamily. As to quaternary structure, monomer.

It is found in the cytoplasm. It catalyses the reaction tRNA(Val) + L-valine + ATP = L-valyl-tRNA(Val) + AMP + diphosphate. Catalyzes the attachment of valine to tRNA(Val). As ValRS can inadvertently accommodate and process structurally similar amino acids such as threonine, to avoid such errors, it has a 'posttransfer' editing activity that hydrolyzes mischarged Thr-tRNA(Val) in a tRNA-dependent manner. The sequence is that of Valine--tRNA ligase from Lacticaseibacillus casei (Lactobacillus casei).